A 319-amino-acid polypeptide reads, in one-letter code: Glucokinase (319 aa).

8-13 is an ATP binding site; it reads GDIGGT.

It belongs to the bacterial glucokinase family.

It localises to the cytoplasm. The enzyme catalyses D-glucose + ATP = D-glucose 6-phosphate + ADP + H(+). The sequence is that of Glucokinase from Chromohalobacter salexigens (strain ATCC BAA-138 / DSM 3043 / CIP 106854 / NCIMB 13768 / 1H11).